A 1342-amino-acid polypeptide reads, in one-letter code: DNA-directed RNA polymerase subunit beta (1342 aa).

Belongs to the RNA polymerase beta chain family. The RNAP catalytic core consists of 2 alpha, 1 beta, 1 beta' and 1 omega subunit. When a sigma factor is associated with the core the holoenzyme is formed, which can initiate transcription.

The enzyme catalyses RNA(n) + a ribonucleoside 5'-triphosphate = RNA(n+1) + diphosphate. Functionally, DNA-dependent RNA polymerase catalyzes the transcription of DNA into RNA using the four ribonucleoside triphosphates as substrates. The chain is DNA-directed RNA polymerase subunit beta from Edwardsiella ictaluri (strain 93-146).